Consider the following 105-residue polypeptide: Flagellar transcriptional regulator FlhD (105 aa).

The protein belongs to the FlhD family. Homodimer; disulfide-linked. Forms a heterohexamer composed of two FlhC and four FlhD subunits. Each FlhC binds a FlhD dimer, forming a heterotrimer, and a hexamer assembles by dimerization of two heterotrimers.

It localises to the cytoplasm. Functionally, functions in complex with FlhC as a master transcriptional regulator that regulates transcription of several flagellar and non-flagellar operons by binding to their promoter region. Activates expression of class 2 flagellar genes, including fliA, which is a flagellum-specific sigma factor that turns on the class 3 genes. Also regulates genes whose products function in a variety of physiological pathways. In Ralstonia pickettii (strain 12J), this protein is Flagellar transcriptional regulator FlhD.